The chain runs to 772 residues: Nudix hydrolase 3 (772 aa).

The span at 1–14 (MAEEHFDVLTKSGE) shows a compositional bias: basic and acidic residues. Positions 1-25 (MAEEHFDVLTKSGEKTGVSKPRGEV) are disordered. The region spanning 30 to 172 (DYHRAVHVWI…DPAYVPYDVN (143 aa)) is the Nudix hydrolase domain. Positions 69–90 (GHISAGDTSLLSAQRELEEELG) match the Nudix box motif. Positions 84 and 88 each coordinate Mg(2+).

It belongs to the Nudix hydrolase family. Mg(2+) is required as a cofactor. The cofactor is Mn(2+). In terms of tissue distribution, expressed in roots, stems and, at lower level, leaves.

Functionally, probably mediates the hydrolysis of some nucleoside diphosphate derivatives. The chain is Nudix hydrolase 3 (NUDT3) from Arabidopsis thaliana (Mouse-ear cress).